Consider the following 158-residue polypeptide: Transcriptional repressor NrdR (158 aa).

The disordered stretch occupies residues 1–22 (MRCPYCGSEDTQVKDSRPAEDN). The segment at 3–34 (CPYCGSEDTQVKDSRPAEDNTSIRRRRICPDC) is a zinc-finger region. The span at 11-22 (TQVKDSRPAEDN) shows a compositional bias: basic and acidic residues. An ATP-cone domain is found at 49-139 (LMVIKKTGRK…VYRDFSHAED (91 aa)).

It belongs to the NrdR family. Zn(2+) serves as cofactor.

Functionally, negatively regulates transcription of bacterial ribonucleotide reductase nrd genes and operons by binding to NrdR-boxes. The polypeptide is Transcriptional repressor NrdR (Rhizobium rhizogenes (strain K84 / ATCC BAA-868) (Agrobacterium radiobacter)).